The following is a 436-amino-acid chain: Sulfopropanediol 3-dehydrogenase (436 aa).

3 residues coordinate NAD(+): tyrosine 118, glutamine 180, and asparagine 203. Residues glutamine 248 and histidine 251 each contribute to the Zn(2+) site. Residues glutamate 318 and histidine 319 each act as proton acceptor in the active site. Zn(2+)-binding residues include aspartate 352 and histidine 411.

The protein belongs to the histidinol dehydrogenase family. HpsN subfamily. Zn(2+) serves as cofactor.

It catalyses the reaction (2R)-3-sulfopropanediol + 2 NAD(+) + H2O = (2R)-3-sulfolactate + 2 NADH + 3 H(+). Functionally, catalyzes the NAD-dependent oxidation of (R)-2,3-dihydroxypropane-1-sulfonate to (R)-3-sulfolactate. The polypeptide is Sulfopropanediol 3-dehydrogenase (Cupriavidus pinatubonensis (strain JMP 134 / LMG 1197) (Cupriavidus necator (strain JMP 134))).